Here is a 447-residue protein sequence, read N- to C-terminus: NADP-specific glutamate dehydrogenase (447 aa).

K92, Q113, and K116 together coordinate substrate. Residue K128 is the Proton donor of the active site. G167 contacts substrate. NADP(+) is bound by residues T211 and N242. S380 contacts substrate.

It belongs to the Glu/Leu/Phe/Val dehydrogenases family. As to quaternary structure, homohexamer.

The enzyme catalyses L-glutamate + NADP(+) + H2O = 2-oxoglutarate + NH4(+) + NADPH + H(+). Competitively inhibited by homoserine and by glutamine. In terms of biological role, catalyzes the reversible oxidative deamination of glutamate to alpha-ketoglutarate and ammonia. In Escherichia coli (strain K12), this protein is NADP-specific glutamate dehydrogenase.